A 206-amino-acid polypeptide reads, in one-letter code: Large ribosomal subunit protein uL13x (206 aa).

The protein belongs to the universal ribosomal protein uL13 family.

This Arabidopsis thaliana (Mouse-ear cress) protein is Large ribosomal subunit protein uL13x (RPL13AC).